The sequence spans 250 residues: Uracil-DNA glycosylase (250 aa).

Asp-78 functions as the Proton acceptor in the catalytic mechanism. Residues 228–250 form a disordered region; the sequence is RGQKPVDWSGEQNNASRQGEFAL.

The protein belongs to the uracil-DNA glycosylase (UDG) superfamily. UNG family.

The protein resides in the cytoplasm. It catalyses the reaction Hydrolyzes single-stranded DNA or mismatched double-stranded DNA and polynucleotides, releasing free uracil.. In terms of biological role, excises uracil residues from the DNA which can arise as a result of misincorporation of dUMP residues by DNA polymerase or due to deamination of cytosine. In Bordetella pertussis (strain Tohama I / ATCC BAA-589 / NCTC 13251), this protein is Uracil-DNA glycosylase.